We begin with the raw amino-acid sequence, 188 residues long: ATP synthase subunit b (188 aa).

A helical transmembrane segment spans residues 24–44 (LPASYDIVWSLVVFIIVLILF).

Belongs to the ATPase B chain family. F-type ATPases have 2 components, F(1) - the catalytic core - and F(0) - the membrane proton channel. F(1) has five subunits: alpha(3), beta(3), gamma(1), delta(1), epsilon(1). F(0) has three main subunits: a(1), b(2) and c(10-14). The alpha and beta chains form an alternating ring which encloses part of the gamma chain. F(1) is attached to F(0) by a central stalk formed by the gamma and epsilon chains, while a peripheral stalk is formed by the delta and b chains.

It localises to the cell membrane. F(1)F(0) ATP synthase produces ATP from ADP in the presence of a proton or sodium gradient. F-type ATPases consist of two structural domains, F(1) containing the extramembraneous catalytic core and F(0) containing the membrane proton channel, linked together by a central stalk and a peripheral stalk. During catalysis, ATP synthesis in the catalytic domain of F(1) is coupled via a rotary mechanism of the central stalk subunits to proton translocation. In terms of biological role, component of the F(0) channel, it forms part of the peripheral stalk, linking F(1) to F(0). This Corynebacterium diphtheriae (strain ATCC 700971 / NCTC 13129 / Biotype gravis) protein is ATP synthase subunit b.